Here is a 327-residue protein sequence, read N- to C-terminus: Zinc transport protein ZntB (327 aa).

The Cytoplasmic segment spans residues Met-1–Ser-271. The helical transmembrane segment at Leu-272 to Gly-292 threads the bilayer. Residues Gly-293 to Pro-300 are Periplasmic-facing. A helical transmembrane segment spans residues Phe-301–Leu-321. Residues Lys-322 to Leu-327 are Cytoplasmic-facing.

Belongs to the CorA metal ion transporter (MIT) (TC 1.A.35) family.

It is found in the cell inner membrane. It catalyses the reaction Zn(2+)(out) + H(+)(out) = Zn(2+)(in) + H(+)(in). Functionally, zinc transporter. Acts as a Zn(2+):proton symporter, which likely mediates zinc ion uptake. The sequence is that of Zinc transport protein ZntB from Pectobacterium atrosepticum (strain SCRI 1043 / ATCC BAA-672) (Erwinia carotovora subsp. atroseptica).